The primary structure comprises 817 residues: Nuclear hormone receptor family member nhr-48 (817 aa).

Residues 49 to 91 (YNDDKDDPFYEDEGSGGGTSGGGKKSSRKRANTTSSSGGNEKE) form a disordered region. Over residues 52-62 (DKDDPFYEDEG) the composition is skewed to acidic residues. Positions 63–72 (SGGGTSGGGK) are enriched in gly residues. The nuclear receptor DNA-binding region spans 97-172 (NKVCRVCGDK…VGMKKEWIMS (76 aa)). NR C4-type zinc fingers lie at residues 100–120 (CRVC…CESC) and 136–155 (CPFN…CQRC). The span at 202–212 (ACMEDESENSY) shows a compositional bias: acidic residues. 2 disordered regions span residues 202–221 (ACME…PSHQ) and 258–284 (MNFY…SSQL). The segment covering 273 to 284 (LPSNSCASSSQL) has biased composition (polar residues).

The protein belongs to the nuclear hormone receptor family.

It is found in the nucleus. In terms of biological role, orphan nuclear receptor. This Caenorhabditis elegans protein is Nuclear hormone receptor family member nhr-48 (nhr-48).